We begin with the raw amino-acid sequence, 112 residues long: Nitrogen regulatory protein P-II (112 aa).

An O-UMP-tyrosine modification is found at Y51.

This sequence belongs to the P(II) protein family. In terms of assembly, homotrimer. Uridylylated/deuridylylated by GlnD.

In terms of biological role, P-II indirectly controls the transcription of the glutamine synthetase gene (GlnA). P-II prevents NR-II-catalyzed conversion of NR-I to NR-I-phosphate, the transcriptional activator of GlnA. When P-II is uridylylated to P-II-UMP, these events are reversed. When the ratio of Gln to 2-ketoglutarate decreases, P-II is uridylylated to P-II-UMP, which causes the deadenylation of glutamine synthetase by GlnE, so activating the enzyme. The chain is Nitrogen regulatory protein P-II (glnB) from Haemophilus influenzae (strain ATCC 51907 / DSM 11121 / KW20 / Rd).